Here is a 324-residue protein sequence, read N- to C-terminus: Viral cathepsin (324 aa).

An N-terminal signal peptide occupies residues M1 to G16. Residues A17 to G113 constitute a propeptide, activation peptide. 3 disulfides stabilise this stretch: C134–C175, C168–C208, and C263–C311. Residue C137 is part of the active site. N-linked (GlcNAc...) asparagine; by host glycosylation occurs at N159. Residues H270 and N290 contribute to the active site.

This sequence belongs to the peptidase C1 family. In terms of processing, synthesized as an inactive proenzyme and activated by proteolytic removal of the inhibitory propeptide.

The catalysed reaction is Endopeptidase of broad specificity, hydrolyzing substrates of both cathepsin L and cathepsin B.. Its function is as follows. Cysteine protease that plays an essential role in host liquefaction to facilitate horizontal transmission of the virus. May participate in the degradation of foreign protein expressed by the baculovirus system. The sequence is that of Viral cathepsin (VCATH) from Antheraea pernyi nuclear polyhedrosis virus (ApNPV).